The chain runs to 949 residues: Bifunctional glutamine synthetase adenylyltransferase/adenylyl-removing enzyme (949 aa).

The adenylyl removase stretch occupies residues 1 to 450 (MQNQGNKVLS…HFNATVGGTD (450 aa)). The tract at residues 455 to 949 (NDHWTALFWN…IEIYNEILAI (495 aa)) is adenylyl transferase.

The protein belongs to the GlnE family. Requires Mg(2+) as cofactor.

It catalyses the reaction [glutamine synthetase]-O(4)-(5'-adenylyl)-L-tyrosine + phosphate = [glutamine synthetase]-L-tyrosine + ADP. It carries out the reaction [glutamine synthetase]-L-tyrosine + ATP = [glutamine synthetase]-O(4)-(5'-adenylyl)-L-tyrosine + diphosphate. Involved in the regulation of glutamine synthetase GlnA, a key enzyme in the process to assimilate ammonia. When cellular nitrogen levels are high, the C-terminal adenylyl transferase (AT) inactivates GlnA by covalent transfer of an adenylyl group from ATP to specific tyrosine residue of GlnA, thus reducing its activity. Conversely, when nitrogen levels are low, the N-terminal adenylyl removase (AR) activates GlnA by removing the adenylyl group by phosphorolysis, increasing its activity. The regulatory region of GlnE binds the signal transduction protein PII (GlnB) which indicates the nitrogen status of the cell. This chain is Bifunctional glutamine synthetase adenylyltransferase/adenylyl-removing enzyme, found in Shewanella frigidimarina (strain NCIMB 400).